The primary structure comprises 912 residues: Isoleucine--tRNA ligase (912 aa).

A 'HIGH' region motif is present at residues 57–67; it reads PYANGDIHLGT. Residue E549 coordinates L-isoleucyl-5'-AMP. Positions 590 to 594 match the 'KMSKS' region motif; the sequence is KMSKS. K593 lines the ATP pocket. Residues C880, C883, C900, and C903 each contribute to the Zn(2+) site.

Belongs to the class-I aminoacyl-tRNA synthetase family. IleS type 1 subfamily. As to quaternary structure, monomer. It depends on Zn(2+) as a cofactor.

The protein resides in the cytoplasm. The enzyme catalyses tRNA(Ile) + L-isoleucine + ATP = L-isoleucyl-tRNA(Ile) + AMP + diphosphate. Catalyzes the attachment of isoleucine to tRNA(Ile). As IleRS can inadvertently accommodate and process structurally similar amino acids such as valine, to avoid such errors it has two additional distinct tRNA(Ile)-dependent editing activities. One activity is designated as 'pretransfer' editing and involves the hydrolysis of activated Val-AMP. The other activity is designated 'posttransfer' editing and involves deacylation of mischarged Val-tRNA(Ile). This is Isoleucine--tRNA ligase from Fervidobacterium pennivorans (strain DSM 9078 / Ven5).